Consider the following 377-residue polypeptide: Cell division protein FtsZ (377 aa).

A compositionally biased stretch (acidic residues) spans 1–16; sequence MDSIVDDAIDEAEDMG. The interval 1 to 33 is disordered; it reads MDSIVDDAIDEAEDMGDGSAEVGGPTDINRSGT. GTP is bound by residues 57 to 61, 144 to 146, E175, R179, and D222; these read GAGGN and GTG.

This sequence belongs to the FtsZ family. In terms of assembly, homodimer. Polymerizes to form a dynamic ring structure in a strictly GTP-dependent manner. Interacts directly with several other division proteins.

The protein resides in the cytoplasm. Functionally, essential cell division protein that forms a contractile ring structure (Z ring) at the future cell division site. The regulation of the ring assembly controls the timing and the location of cell division. One of the functions of the FtsZ ring is to recruit other cell division proteins to the septum to produce a new cell wall between the dividing cells. Binds GTP and shows GTPase activity. This Haloferax mediterranei (strain ATCC 33500 / DSM 1411 / JCM 8866 / NBRC 14739 / NCIMB 2177 / R-4) (Halobacterium mediterranei) protein is Cell division protein FtsZ.